The primary structure comprises 1118 residues: Phytochrome 1 (1118 aa).

Residues 1–10 show a composition bias toward low complexity; the sequence is MSSTRHSYSS. The interval 1 to 23 is disordered; that stretch reads MSSTRHSYSSGGSGKSKHGRRIA. A GAF domain is found at 212 to 391; sequence DIGLLCDSVV…VFSLQLNMEV (180 aa). Cys317 provides a ligand contact to phytochromobilin. PAS domains lie at 606 to 677 and 740 to 811; these read VASE…LEGE and DYKA…TKLM. Residues 887–1110 enclose the Histidine kinase domain; that stretch reads YVKEELKKPL…LVTIQFPLAH (224 aa).

This sequence belongs to the phytochrome family. In terms of assembly, homodimer. Contains one covalently linked phytochromobilin chromophore.

Functionally, regulatory photoreceptor which exists in two forms that are reversibly interconvertible by light: the Pr form that absorbs maximally in the red region of the spectrum and the Pfr form that absorbs maximally in the far-red region. Photoconversion of Pr to Pfr induces an array of morphogenic responses, whereas reconversion of Pfr to Pr cancels the induction of those responses. Pfr controls the expression of a number of nuclear genes including those encoding the small subunit of ribulose-bisphosphate carboxylase, chlorophyll A/B binding protein, protochlorophyllide reductase, rRNA, etc. It also controls the expression of its own gene(s) in a negative feedback fashion. The protein is Phytochrome 1 (PHY1) of Adiantum capillus-veneris (Maidenhair fern).